A 495-amino-acid chain; its full sequence is MALELFNTLSGKIETFQPLEDNEVRMYACGPTVYDYGHIGNFRTFIVVDTLRRFLKQSGYKLKHVMNVTDVDDKIIRNAARDGKTVQEYTAKYRKAFLEDCEALNIEHPELLVNATDHIDEMARFIKRMEDLDVAYKTEDGSYYFRIAKFPEYGKLSKKDFAGMNDGARVDVDEYEKDNARDFALWKAPKPGEAKWDTVIGSGRPGWHIECSIMSMKYLGESFDIHLGGEDLVFPHHENEIAQSESVTHKKFANFWVHSRFLLVEGQKMSKSLGNFFTVRDLILMGHKPSSIRFLLMSVPYRKQLNFTFDGLKQAAISVDRLRNFKRRIQTEPFAEGTNDKIGLMANETITKIKAALDNDLNTAEALAPIFDLVRDVNAAADAGEVKRGDVASLLEALQKFDEIFAVLNDDDSGKVKFAVDWANQEGKADKISAETAEMAKAAGLSDEKVEALVAEHSAARKAKDFKRSDAIRAELMESGIILENTKDGVRWKRK.

Position 29 (C29) interacts with Zn(2+). Residues 31–41 (PTVYDYGHIGN) carry the 'HIGH' region motif. The Zn(2+) site is built by C211, H236, and E240. The 'KMSKS' region signature appears at 268–272 (KMSKS). An ATP-binding site is contributed by K271.

Belongs to the class-I aminoacyl-tRNA synthetase family. As to quaternary structure, monomer. Zn(2+) serves as cofactor.

It is found in the cytoplasm. The catalysed reaction is tRNA(Cys) + L-cysteine + ATP = L-cysteinyl-tRNA(Cys) + AMP + diphosphate. In Koribacter versatilis (strain Ellin345), this protein is Cysteine--tRNA ligase.